Here is a 602-residue protein sequence, read N- to C-terminus: MTTISQKFIRNFSIIAHIDHGKSTLADRFIQLCGGLSEREMKAQVLDSMDIERERGITIKAQSVTLNFKSQDGHFYQLNFIDTPGHVDFSYEVSRSLAACEGALLVVDAAQGVEAQTVATCYTAIEQGLVVLPVLNKIDLPQADPERAIQEIEDVIGIEAHDAIRVSAKEGRGVKELLEQLVVAIPPPVGDPEAPLQALIIDSWFDSYLGVVSLVRVKAGTLRKGDKIRVMSTGKDYYADQIGHFTPKRQPLEELSAGAVGFVVAGIKDIFGAPVGDTLTHAKQSAGSPLPGFKQVKPQVFAGLFPINSEEYEPFREALAKLRLNDAALFYEPESSEALGFGFRCGFLGMLHMEIVQERLEREYNLELITTAPTVSYEILAKQGEMLYVDNPSHLPEPGKIGEIREPIAVANILVPPTYLGAVITLCVEKRGVQKKLLYLSNQVSMTYEIPLSEVVLDFFDRLKSASRGYASLDYSFNHFQAADLVKLDILISGQKVDALATIVHRDLAYTRGRELTERLKDLIPRQMFEVAIQAAIGAKIIARTSVKALRKNVTAKCYGGDITRKRKLLEKQKAGKKRMKQVGKVAIPQEAFLAVLRVKNE.

One can recognise a tr-type G domain in the interval lysine 7 to valine 189. GTP contacts are provided by residues aspartate 19–threonine 24 and asparagine 136–aspartate 139.

It belongs to the TRAFAC class translation factor GTPase superfamily. Classic translation factor GTPase family. LepA subfamily.

The protein localises to the cell inner membrane. The catalysed reaction is GTP + H2O = GDP + phosphate + H(+). In terms of biological role, required for accurate and efficient protein synthesis under certain stress conditions. May act as a fidelity factor of the translation reaction, by catalyzing a one-codon backward translocation of tRNAs on improperly translocated ribosomes. Back-translocation proceeds from a post-translocation (POST) complex to a pre-translocation (PRE) complex, thus giving elongation factor G a second chance to translocate the tRNAs correctly. Binds to ribosomes in a GTP-dependent manner. The chain is Elongation factor 4 from Coxiella burnetii (strain RSA 493 / Nine Mile phase I).